We begin with the raw amino-acid sequence, 132 residues long: Fatty acid-binding protein, intestinal (132 aa).

An N-acetylalanine modification is found at Ala-2. The hexadecanoate site is built by Trp-83 and Arg-107. 2 residues coordinate tetradecanoate: Trp-83 and Arg-107.

This sequence belongs to the calycin superfamily. Fatty-acid binding protein (FABP) family.

It localises to the cytoplasm. In terms of biological role, FABPs are thought to play a role in the intracellular transport of long-chain fatty acids and their acyl-CoA esters. The protein is Fatty acid-binding protein, intestinal (fabp2) of Xenopus laevis (African clawed frog).